The following is a 590-amino-acid chain: Cyclin-dependent kinase-like 3 (590 aa).

Residues 4-286 enclose the Protein kinase domain; sequence YETLGKVGEG…SSDLLHHEYF (283 aa). ATP contacts are provided by residues 10-18 and Lys-33; that span reads VGEGSYGTV. The [NKR]KIAxRE signature appears at 45 to 51; that stretch reads KIAMREI. Residue Asp-125 is the Proton acceptor of the active site. Thr-158 carries the post-translational modification Phosphothreonine. Tyr-160 carries the post-translational modification Phosphotyrosine. 2 disordered regions span residues 459-508 and 547-590; these read RAKK…SNEN and LKRE…PDVE. Residues 466-477 show a composition bias toward polar residues; it reads SSQSIGQVMPNS. Composition is skewed to basic and acidic residues over residues 547-556 and 580-590; these read LKRESKKTDS and TERKKNLPDVE.

The protein belongs to the protein kinase superfamily. CMGC Ser/Thr protein kinase family. CDC2/CDKX subfamily.

Its subcellular location is the cytoplasm. It carries out the reaction L-seryl-[protein] + ATP = O-phospho-L-seryl-[protein] + ADP + H(+). The enzyme catalyses L-threonyl-[protein] + ATP = O-phospho-L-threonyl-[protein] + ADP + H(+). The protein is Cyclin-dependent kinase-like 3 of Macaca fascicularis (Crab-eating macaque).